The chain runs to 85 residues: N.vectensis toxin 6 (85 aa).

An N-terminal signal peptide occupies residues 1–20 (MISFKTVIVCLFLWVVIIGA). 3 disulfides stabilise this stretch: C46–C82, C48–C71, and C64–C83.

Its function is as follows. Probable toxin. The protein is N.vectensis toxin 6 of Nematostella vectensis (Starlet sea anemone).